The sequence spans 414 residues: CinA-like protein (414 aa).

It belongs to the CinA family.

This chain is CinA-like protein, found in Akkermansia muciniphila (strain ATCC BAA-835 / DSM 22959 / JCM 33894 / BCRC 81048 / CCUG 64013 / CIP 107961 / Muc).